Here is a 78-residue protein sequence, read N- to C-terminus: MSRLLALLILVIPGAISALGIKLMRDTLFGHTIKPFSALWLQGLSGFIFFAIGLYVLAGFILYRDRKRNQVSPRFRKR.

Helical transmembrane passes span 5 to 24 and 39 to 61; these read LALL…IKLM and LWLQ…AGFI.

It is found in the cell membrane. This is an uncharacterized protein from Bacillus subtilis (strain 168).